The chain runs to 159 residues: MIRFTQVINSEGRDNFTDRENCLIVCLTMDERTKSRLKVCLNNGDEAGLFLPRGTVLKEGDLLQAETGEIALVEAAEEVVSTAFTDDLLLLAKACYHLGNRHVPLQVELGWCRYLHDHVLDDMVKGLGLGVRVERAKYQPEPGAYGGSISGASHGHHHH.

The protein belongs to the UreE family.

The protein localises to the cytoplasm. Involved in urease metallocenter assembly. Binds nickel. Probably functions as a nickel donor during metallocenter assembly. The sequence is that of Urease accessory protein UreE from Vibrio parahaemolyticus.